The primary structure comprises 218 residues: Cytochrome b6 (218 aa).

A helical membrane pass occupies residues 35–55 (IFYCLGGITLVCFLIQFATGF). Residue C38 participates in heme c binding. 2 residues coordinate heme b: H89 and H103. The next 3 membrane-spanning stretches (helical) occupy residues 93–113 (ASMM…TGGF), 119–139 (LTWV…VTGY), and 189–209 (LHTF…FLMI). 2 residues coordinate heme b: H190 and H205.

Belongs to the cytochrome b family. PetB subfamily. As to quaternary structure, the 4 large subunits of the cytochrome b6-f complex are cytochrome b6, subunit IV (17 kDa polypeptide, PetD), cytochrome f and the Rieske protein, while the 4 small subunits are PetG, PetL, PetM and PetN. The complex functions as a dimer. Requires heme b as cofactor. Heme c serves as cofactor.

Its subcellular location is the cellular thylakoid membrane. Functionally, component of the cytochrome b6-f complex, which mediates electron transfer between photosystem II (PSII) and photosystem I (PSI), cyclic electron flow around PSI, and state transitions. In Prochlorococcus marinus (strain MIT 9301), this protein is Cytochrome b6.